The sequence spans 312 residues: Apulose-4-phosphate transketolase subunit B (312 aa).

It belongs to the transketolase family. Probable heterodimer composed of AptA and AptB. Requires thiamine diphosphate as cofactor.

It carries out the reaction apulose 4-phosphate + D-glyceraldehyde 3-phosphate = D-xylulose 5-phosphate + dihydroxyacetone phosphate. It functions in the pathway carbohydrate metabolism. Functionally, involved in catabolism of D-apiose. Catalyzes the transfer of the glycolaldehyde group from apulose-4-phosphate to D-glyceraldehyde 3-phosphate, generating dihydroxyacetone phosphate and D-xylulose-5-phosphate. In Phocaeicola vulgatus (strain ATCC 8482 / DSM 1447 / JCM 5826 / CCUG 4940 / NBRC 14291 / NCTC 11154) (Bacteroides vulgatus), this protein is Apulose-4-phosphate transketolase subunit B.